Reading from the N-terminus, the 1278-residue chain is Alpha-glucan water dikinase 2 (1278 aa).

A signal peptide spans 1–23 (MATSKSQQFQLIEGMELQITVTG). The Tele-phosphohistidine intermediate role is filled by His-886.

This sequence belongs to the PEP-utilizing enzyme family. In terms of assembly, homodimer. It depends on Mg(2+) as a cofactor.

The enzyme catalyses [(1-&gt;4)-alpha-D-glucosyl](n) + n ATP + n H2O = [(1-&gt;4)-6-phospho-alpha-D-glucosyl](n) + n AMP + n phosphate + 2n H(+). Its function is as follows. Mediates the incorporation of phosphate into alpha-glucan, mostly at the C-6 position of glucose units. The protein is Alpha-glucan water dikinase 2 (GWD2) of Arabidopsis thaliana (Mouse-ear cress).